The chain runs to 638 residues: MVTIVEVKQHIKKFAAGNELYLQEVLGCHYENDIYTFRVWAPNAQKVWLVGDFNDWDKSLEMSQTLDGVWEIKTSLPKEGQLYKFLVKQADGREVMKIDPMAFELEPRPGSAAVIVKLPNKKWLDGAWMGRNKRSNHFARPINIYEVHASSWKRHTDGSLYTLKDLQKELIPYVKEQGFNYIEFLPLTAHPLDASWGYQTIGYYALERTYGTPRELQDFVEACHKENIGVLADWVPGHFCINDDALAYYDGTPCYEFSEKWRAENKGWGALNFDLGKPEVQSFLLSSALFWLEFYHLDGLRVDAVSNMIYRDYDRSDGEWKTDKFGGNRNLEGIEFLQKLNRTIKGKHPECLMIAEESSAQVKITGRIEDGGLGFDFKWNMGWMNDILRFYEMDPLFRKFNFNLATFSFMYRMSENFILPLSHDEVVHGKRSLMNKMFGDRDKQFAQLRNLLTLQMTYPGKKLLFMGSEFGQYLEWRYNDGLDWAELKDELNAKMKHFDQDLNSFYLNEPALWQLEQREDSVQIIDADNKDESVLSFIRQGKTRHDFLIVILNFTPVDRKKITIGVPYAGKYCEVFNSARKEYGGSWNQEKQNLKTQNNSFKNFNYQVQLDIPGFSAVILKPVDVHIKRRINRKTKTK.

Asp-303 acts as the Nucleophile in catalysis. The Proton donor role is filled by Glu-356.

It belongs to the glycosyl hydrolase 13 family. GlgB subfamily. As to quaternary structure, monomer.

The enzyme catalyses Transfers a segment of a (1-&gt;4)-alpha-D-glucan chain to a primary hydroxy group in a similar glucan chain.. The protein operates within glycan biosynthesis; glycogen biosynthesis. Its function is as follows. Catalyzes the formation of the alpha-1,6-glucosidic linkages in glycogen by scission of a 1,4-alpha-linked oligosaccharide from growing alpha-1,4-glucan chains and the subsequent attachment of the oligosaccharide to the alpha-1,6 position. This Lactobacillus acidophilus (strain ATCC 700396 / NCK56 / N2 / NCFM) protein is 1,4-alpha-glucan branching enzyme GlgB.